The following is a 442-amino-acid chain: F-box/FBD/LRR-repeat protein At2g26030 (442 aa).

Positions 3 to 49 constitute an F-box domain; that stretch reads CDRICELPDSLLTQVLSYLPTIDSVKTSVLSKRWEFLWLRVPVLDLK. 6 LRR repeats span residues 128-160, 162-187, 188-214, 234-260, 278-309, and 324-352; these read CNTL…HLED, WYYD…VLIR, PIDF…RLTF, YLNF…DIDS, KRDI…DRYS, and QAAV…ILDF. The FBD domain maps to 358 to 410; that stretch reads PEQDGLTYVPQCLLSSLECVEIRELIMGEETGEKLVRYFLKNSVVLKKLILRL.

The chain is F-box/FBD/LRR-repeat protein At2g26030 from Arabidopsis thaliana (Mouse-ear cress).